The primary structure comprises 610 residues: Zinc metalloproteinase-disintegrin-like acurhagin (610 aa).

Residues 1 to 20 (MIQVLLVTICLAAFPYQGSS) form the signal peptide. The propeptide occupies 21–191 (IILESGDVND…ISQLNLIPEQ (171 aa)). Position 192 is a pyrrolidone carboxylic acid (glutamine 192). Residues 198-394 (KYVETVVVVD…HNPECIDNEP (197 aa)) form the Peptidase M12B domain. Residues glutamate 201 and aspartate 285 each contribute to the Ca(2+) site. 3 disulfides stabilise this stretch: cysteine 309/cysteine 389, cysteine 349/cysteine 373, and cysteine 351/cysteine 356. Histidine 334 is a Zn(2+) binding site. Residue glutamate 335 is part of the active site. Zn(2+) is bound by residues histidine 338 and histidine 344. Residue asparagine 372 is glycosylated (N-linked (GlcNAc...) asparagine). Positions 389, 392, 407, 409, 411, 414, and 417 each coordinate Ca(2+). In terms of domain architecture, Disintegrin spans 402 to 488 (PPLCGNELLE…ECPADVFHKN (87 aa)). Disulfide bonds link cysteine 405/cysteine 434, cysteine 416/cysteine 429, cysteine 418/cysteine 424, cysteine 428/cysteine 451, cysteine 442/cysteine 448, cysteine 447/cysteine 473, cysteine 460/cysteine 480, cysteine 467/cysteine 499, cysteine 492/cysteine 504, cysteine 511/cysteine 561, cysteine 526/cysteine 572, cysteine 539/cysteine 549, cysteine 556/cysteine 598, and cysteine 592/cysteine 603. Positions 466-468 (ECD) match the D/ECD-tripeptide motif. Aspartate 468, proline 469, glutamate 471, aspartate 483, and valine 484 together coordinate Ca(2+).

It belongs to the venom metalloproteinase (M12B) family. P-III subfamily. P-IIIa sub-subfamily. Monomer. Zn(2+) serves as cofactor. In terms of processing, N-glycosylated. As to expression, expressed by the venom gland.

The protein resides in the secreted. With respect to regulation, the proteinase activity is slightly enhanced by Ca(2+) and Mg(2+), but is completely inhibited by Zn(2+). Is completely inhibited by phenanthroline and EDTA. Not inhibited by PMSF. Its function is as follows. Snake venom zinc metalloprotease that causes hemorrhage and dose-dependently inhibits platelet aggregation triggered by collagen. This inhibition is due to its binding to glycoprotein VI (GP6) and collagen. The binding to GP6 results in inhibition of the signaling pathway (decrease of tyrosine phosphorylation of signaling proteins such as Syk, LAT, PI3-K and PLCgamma2). Preferentially cleaves alpha chain (FGA) of fibrinogen, followed by beta chain (FGB). Also degrades the extracellular matrix protein fibronectin (FN1), and cleaves collagen and von Willebrand factor (VWF). The polypeptide is Zinc metalloproteinase-disintegrin-like acurhagin (Deinagkistrodon acutus (Hundred-pace snake)).